A 304-amino-acid polypeptide reads, in one-letter code: Ribosomal protein L11 methyltransferase (304 aa).

The S-adenosyl-L-methionine site is built by threonine 156, glycine 177, aspartate 199, and asparagine 240.

It belongs to the methyltransferase superfamily. PrmA family.

It is found in the cytoplasm. It catalyses the reaction L-lysyl-[protein] + 3 S-adenosyl-L-methionine = N(6),N(6),N(6)-trimethyl-L-lysyl-[protein] + 3 S-adenosyl-L-homocysteine + 3 H(+). Its function is as follows. Methylates ribosomal protein L11. In Symbiobacterium thermophilum (strain DSM 24528 / JCM 14929 / IAM 14863 / T), this protein is Ribosomal protein L11 methyltransferase.